We begin with the raw amino-acid sequence, 247 residues long: Eukaryotic translation initiation factor 6-1 (247 aa).

It belongs to the eIF-6 family. Monomer. Associates with the 60S ribosomal subunit.

Its subcellular location is the cytoplasm. The protein resides in the nucleus. It localises to the nucleolus. Functionally, binds to the 60S ribosomal subunit and prevents its association with the 40S ribosomal subunit to form the 80S initiation complex in the cytoplasm. May also be involved in ribosome biogenesis. The protein is Eukaryotic translation initiation factor 6-1 of Arabidopsis thaliana (Mouse-ear cress).